A 316-amino-acid polypeptide reads, in one-letter code: Malate dehydrogenase (316 aa).

NAD(+)-binding positions include 12–17 (GAGNIG) and aspartate 36. Positions 85 and 91 each coordinate substrate. NAD(+)-binding positions include asparagine 98 and 121 to 123 (VTN). 2 residues coordinate substrate: asparagine 123 and arginine 154. The active-site Proton acceptor is the histidine 178.

It belongs to the LDH/MDH superfamily. MDH type 3 family.

It carries out the reaction (S)-malate + NAD(+) = oxaloacetate + NADH + H(+). Its function is as follows. Catalyzes the reversible oxidation of malate to oxaloacetate. The protein is Malate dehydrogenase of Wolbachia sp. subsp. Brugia malayi (strain TRS).